The primary structure comprises 297 residues: Large ribosomal subunit protein uL15m (297 aa).

The N-terminal 22 residues, 1–22, are a transit peptide targeting the mitochondrion; it reads MAGPVRGAAGPWALDLLRALPR. A disordered region spans residues 27–68; that stretch reads NLRPNPGSRKPERRRRGQRRGRKCGRGHKGERQRGTRPRLGF. Residues 37-53 are compositionally biased toward basic residues; sequence PERRRRGQRRGRKCGRG.

The protein belongs to the universal ribosomal protein uL15 family. Component of the mitochondrial ribosome large subunit (39S) which comprises a 16S rRNA and about 50 distinct proteins.

It is found in the mitochondrion. This is Large ribosomal subunit protein uL15m (MRPL15) from Bos taurus (Bovine).